A 55-amino-acid polypeptide reads, in one-letter code: Hydrophobic protein LTI6B (55 aa).

Helical transmembrane passes span 8-28 (IDIL…FGCG) and 31-51 (FWIC…YAIY).

Belongs to the UPF0057 (PMP3) family.

The protein localises to the membrane. In terms of biological role, plays a role in the regulation of membrane potential. Could mediate a proton leak. The polypeptide is Hydrophobic protein LTI6B (LTI6B) (Oryza sativa subsp. indica (Rice)).